The chain runs to 351 residues: MMCDWVWLLLTLCSLLMIVQSLPTNLAEDTKKTEQTMRPKSKRAQEMLMFGNQQNHQPENNPSSSYSSTAEKRTLAASGLGGLKAALIEEEKPSRSNTLNNAFYDRKNYDYGAVNELGYEIPQVWDNSPYSRYYTNEDRRKRSEKSAVASGSSTTIKPSTTSFQSPTSTQQSVQTQVKRNVPIYQEPRFKRELDIDPEDVLTLLSLWENERRKRNWHKYMNEEYENVDDEDNLLEEEDSRNIIPWMDSSVYPPRHYSLDSLSPSDIGIIRTHPSSYYEQYENQYGQQYDTSQYGSPQYGLVYPQQTYYSAPEKRFMISRKRSQAYDPYSNAAQFQLSSQSRGYPYQHRLVY.

Positions 1–21 (MMCDWVWLLLTLCSLLMIVQS) are cleaved as a signal peptide. 2 propeptides span residues 22–177 (LPTN…QTQV) and 192–319 (ELDI…MISR). Polar residues predominate over residues 51–69 (GNQQNHQPENNPSSSYSST). 2 disordered regions span residues 51–71 (GNQQ…STAE) and 136–176 (NEDR…VQTQ). Residues 136–145 (NEDRRKRSEK) are compositionally biased toward basic and acidic residues. Residues 158–176 (PSTTSFQSPTSTQQSVQTQ) are compositionally biased toward low complexity.

The protein localises to the secreted. The sequence is that of Prohormone-2 from Apis mellifera (Honeybee).